Consider the following 92-residue polypeptide: Acylphosphatase (92 aa).

Positions 3–90 constitute an Acylphosphatase-like domain; sequence RVHVLVAGRV…GEFTEFAVLR (88 aa). Catalysis depends on residues arginine 18 and asparagine 36.

Belongs to the acylphosphatase family.

It carries out the reaction an acyl phosphate + H2O = a carboxylate + phosphate + H(+). This chain is Acylphosphatase (acyP), found in Methylococcus capsulatus (strain ATCC 33009 / NCIMB 11132 / Bath).